We begin with the raw amino-acid sequence, 239 residues long: Endonuclease V (239 aa).

Residues aspartate 48 and aspartate 116 each contribute to the Mg(2+) site.

Belongs to the endonuclease V family. The cofactor is Mg(2+).

It localises to the cytoplasm. The catalysed reaction is Endonucleolytic cleavage at apurinic or apyrimidinic sites to products with a 5'-phosphate.. Its function is as follows. DNA repair enzyme involved in the repair of deaminated bases. Selectively cleaves double-stranded DNA at the second phosphodiester bond 3' to a deoxyinosine leaving behind the intact lesion on the nicked DNA. This is Endonuclease V from Xanthomonas oryzae pv. oryzae (strain MAFF 311018).